Here is a 176-residue protein sequence, read N- to C-terminus: Crossover junction endodeoxyribonuclease RuvC (176 aa).

Residues D8, E69, and D141 contribute to the active site. Residues D8, E69, and D141 each coordinate Mg(2+).

This sequence belongs to the RuvC family. As to quaternary structure, homodimer which binds Holliday junction (HJ) DNA. The HJ becomes 2-fold symmetrical on binding to RuvC with unstacked arms; it has a different conformation from HJ DNA in complex with RuvA. In the full resolvosome a probable DNA-RuvA(4)-RuvB(12)-RuvC(2) complex forms which resolves the HJ. Mg(2+) is required as a cofactor.

The protein resides in the cytoplasm. The enzyme catalyses Endonucleolytic cleavage at a junction such as a reciprocal single-stranded crossover between two homologous DNA duplexes (Holliday junction).. Its function is as follows. The RuvA-RuvB-RuvC complex processes Holliday junction (HJ) DNA during genetic recombination and DNA repair. Endonuclease that resolves HJ intermediates. Cleaves cruciform DNA by making single-stranded nicks across the HJ at symmetrical positions within the homologous arms, yielding a 5'-phosphate and a 3'-hydroxyl group; requires a central core of homology in the junction. The consensus cleavage sequence is 5'-(A/T)TT(C/G)-3'. Cleavage occurs on the 3'-side of the TT dinucleotide at the point of strand exchange. HJ branch migration catalyzed by RuvA-RuvB allows RuvC to scan DNA until it finds its consensus sequence, where it cleaves and resolves the cruciform DNA. The polypeptide is Crossover junction endodeoxyribonuclease RuvC (Pseudomonas syringae pv. tomato (strain ATCC BAA-871 / DC3000)).